The sequence spans 143 residues: Large ribosomal subunit protein uL15 (143 aa).

The tract at residues 1–51 is disordered; it reads MELNTIKPASGAKHAKRRVGRGIGSGLGKTAGRGHKGQKSRAGGYHKVGFE. Residues 21 to 31 are compositionally biased toward gly residues; the sequence is RGIGSGLGKTA.

It belongs to the universal ribosomal protein uL15 family. Part of the 50S ribosomal subunit.

Binds to the 23S rRNA. This chain is Large ribosomal subunit protein uL15, found in Methylibium petroleiphilum (strain ATCC BAA-1232 / LMG 22953 / PM1).